We begin with the raw amino-acid sequence, 196 residues long: MSDENPLQPPWLNAPPVDSYPYEESHDLRTGPKLHPTLDGLLPYIGVWRGRGRGGYPTIEDFDFAQEIRISHDGRPFLCYESRAWLLDEQSRPIRPAGREMGWWRPVLDGDRATNEWEALMSTPTGVMELHLGKRTGTQLEFATDAVVRTPTAKEVTAGHRLFGIVEGALLYAQEMAAVGHGLTPHLSARLIRVGG.

Residues 46–52 carry the GXWXGXG motif; it reads GVWRGRG. H186 provides a ligand contact to heme b.

It belongs to the nitrobindin family. In terms of assembly, homodimer. It depends on heme b as a cofactor.

It catalyses the reaction peroxynitrite = nitrate. Its pathway is nitrogen metabolism. Functionally, heme-binding protein able to scavenge peroxynitrite and to protect free L-tyrosine against peroxynitrite-mediated nitration, by acting as a peroxynitrite isomerase that converts peroxynitrite to nitrate. Therefore, this protein likely plays a role in peroxynitrite sensing and in the detoxification of reactive nitrogen and oxygen species (RNS and ROS, respectively). Is able to bind nitric oxide (NO) in vitro, but may act as a sensor of peroxynitrite levels in vivo. The sequence is that of Peroxynitrite isomerase from Salinispora tropica (strain ATCC BAA-916 / DSM 44818 / JCM 13857 / NBRC 105044 / CNB-440).